A 739-amino-acid chain; its full sequence is Catalase-peroxidase (739 aa).

Positions 1–23 (MLKKIVTALGMSGMLLAANSAIA) are cleaved as a signal peptide. The segment at residues 100–221 (WHDAGTYRLA…YAATQMGLIY (122 aa)) is a cross-link (tryptophyl-tyrosyl-methioninium (Trp-Tyr) (with M-247)). His101 functions as the Proton acceptor in the catalytic mechanism. Residues 221-247 (YVNPEGPDGKPDIKGAASEIRQAFRAM) constitute a cross-link (tryptophyl-tyrosyl-methioninium (Tyr-Met) (with W-100)). Heme b is bound at residue His262.

It belongs to the peroxidase family. Peroxidase/catalase subfamily. Homodimer or homotetramer. It depends on heme b as a cofactor. Post-translationally, formation of the three residue Trp-Tyr-Met cross-link is important for the catalase, but not the peroxidase activity of the enzyme.

The enzyme catalyses H2O2 + AH2 = A + 2 H2O. It catalyses the reaction 2 H2O2 = O2 + 2 H2O. Functionally, bifunctional enzyme with both catalase and broad-spectrum peroxidase activity. The chain is Catalase-peroxidase from Francisella philomiragia subsp. philomiragia (strain ATCC 25017 / CCUG 19701 / FSC 153 / O#319-036).